We begin with the raw amino-acid sequence, 124 residues long: uncharacterized protein (124 aa).

This is an uncharacterized protein from Lactobacillus acidophilus.